We begin with the raw amino-acid sequence, 442 residues long: Trigger factor (442 aa).

The PPIase FKBP-type domain maps to 163–248 (YDRVTINYCI…IIKIEKKQEL (86 aa)).

It belongs to the FKBP-type PPIase family. Tig subfamily.

Its subcellular location is the cytoplasm. It catalyses the reaction [protein]-peptidylproline (omega=180) = [protein]-peptidylproline (omega=0). In terms of biological role, involved in protein export. Acts as a chaperone by maintaining the newly synthesized protein in an open conformation. Functions as a peptidyl-prolyl cis-trans isomerase. The sequence is that of Trigger factor from Buchnera aphidicola subsp. Acyrthosiphon pisum (strain Tuc7).